The following is a 224-amino-acid chain: UPF0758 protein Maqu_3564 (224 aa).

In terms of domain architecture, MPN spans 102–224 (PLRSPADTRR…VISLAERGLM (123 aa)). His173, His175, and Asp186 together coordinate Zn(2+). Residues 173-186 (HNHPSGVAEPSQAD) carry the JAMM motif motif.

This sequence belongs to the UPF0758 family.

This chain is UPF0758 protein Maqu_3564, found in Marinobacter nauticus (strain ATCC 700491 / DSM 11845 / VT8) (Marinobacter aquaeolei).